We begin with the raw amino-acid sequence, 464 residues long: Argininosuccinate lyase (464 aa).

The protein belongs to the lyase 1 family. Argininosuccinate lyase subfamily.

The protein localises to the cytoplasm. The enzyme catalyses 2-(N(omega)-L-arginino)succinate = fumarate + L-arginine. It functions in the pathway amino-acid biosynthesis; L-arginine biosynthesis; L-arginine from L-ornithine and carbamoyl phosphate: step 3/3. The polypeptide is Argininosuccinate lyase (Pseudomonas savastanoi pv. phaseolicola (strain 1448A / Race 6) (Pseudomonas syringae pv. phaseolicola (strain 1448A / Race 6))).